The following is a 214-amino-acid chain: Probable transaldolase (214 aa).

Lysine 83 acts as the Schiff-base intermediate with substrate in catalysis.

The protein belongs to the transaldolase family. Type 3B subfamily.

It localises to the cytoplasm. The catalysed reaction is D-sedoheptulose 7-phosphate + D-glyceraldehyde 3-phosphate = D-erythrose 4-phosphate + beta-D-fructose 6-phosphate. The protein operates within carbohydrate degradation; pentose phosphate pathway; D-glyceraldehyde 3-phosphate and beta-D-fructose 6-phosphate from D-ribose 5-phosphate and D-xylulose 5-phosphate (non-oxidative stage): step 2/3. Functionally, transaldolase is important for the balance of metabolites in the pentose-phosphate pathway. The sequence is that of Probable transaldolase from Geotalea uraniireducens (strain Rf4) (Geobacter uraniireducens).